The sequence spans 596 residues: Tripeptidyl-peptidase SED2 (596 aa).

Residues 1 to 16 (MLVLKFVCLLASVAAA) form the signal peptide. Residues 18–203 (PTSWSSHKVV…LEAMSEEEFS (186 aa)) constitute a propeptide, removed in mature form. One can recognise a Peptidase S53 domain in the interval 210 to 596 (LVTTACLREL…NFQALTKVLP (387 aa)). Asn265 is a glycosylation site (N-linked (GlcNAc...) asparagine). Residues Glu286 and Asp290 each act as charge relay system in the active site. An N-linked (GlcNAc...) asparagine glycan is attached at Asn403. Residue Ser501 is the Charge relay system of the active site. Residues Asp543 and Ile544 each contribute to the Ca(2+) site. The N-linked (GlcNAc...) asparagine glycan is linked to Asn572. Ca(2+)-binding residues include Gly576 and Asp578.

Ca(2+) is required as a cofactor.

The protein localises to the secreted. Its subcellular location is the extracellular space. The catalysed reaction is Release of an N-terminal tripeptide from a polypeptide.. Secreted tripeptidyl-peptidase which degrades proteins at acidic pHs and is involved in virulence. This is Tripeptidyl-peptidase SED2 (SED2) from Arthroderma otae (strain ATCC MYA-4605 / CBS 113480) (Microsporum canis).